The sequence spans 396 residues: Elongation factor Tu (396 aa).

The region spanning 10–206 (KPHVNVGTIG…AVDAYIPTPQ (197 aa)) is the tr-type G domain. A G1 region spans residues 19-26 (GHVDHGKT). 19 to 26 (GHVDHGKT) provides a ligand contact to GTP. Mg(2+) is bound at residue threonine 26. The interval 60 to 64 (GITIA) is G2. The tract at residues 81 to 84 (DCPG) is G3. Residues 81–85 (DCPGH) and 136–139 (NKVD) each bind GTP. Residues 136 to 139 (NKVD) are G4. The segment at 174-176 (SAL) is G5.

It belongs to the TRAFAC class translation factor GTPase superfamily. Classic translation factor GTPase family. EF-Tu/EF-1A subfamily. As to quaternary structure, monomer.

The protein resides in the cytoplasm. The enzyme catalyses GTP + H2O = GDP + phosphate + H(+). In terms of biological role, GTP hydrolase that promotes the GTP-dependent binding of aminoacyl-tRNA to the A-site of ribosomes during protein biosynthesis. This is Elongation factor Tu from Anaeromyxobacter dehalogenans (strain 2CP-C).